The chain runs to 320 residues: Integrin-binding sialoprotein (320 aa).

The signal sequence occupies residues 1–16; sequence MKTALILLCILGMASA. S31, S68, S76, S77, and S96 each carry phosphoserine. Disordered stretches follow at residues 60–117, 136–225, and 238–264; these read PVQG…VTAS, LPKK…RELT, and FQQT…VEYG. The segment covering 67–106 has biased composition (acidic residues); sequence SSEENGDGDSSEEEGEEEETSNEEENNEDSEGNEDQEAEA. N-linked (GlcNAc...) asparagine glycosylation is present at N108. Positions 139–152 are enriched in basic and acidic residues; sequence KAGDAEGKAPKMKE. S153 is modified (phosphoserine). The segment covering 153–176 has biased composition (acidic residues); it reads SDEEEEEEEEEENENEEAEVDENE. 2 stretches are compositionally biased toward polar residues: residues 177–188 and 249–261; these read QVVNGTSTNSTE and GTTS…SSTV. N180 and N185 each carry an N-linked (GlcNAc...) asparagine glycan. The Integrin-binding motif signature appears at 289–291; the sequence is RGD. Sulfotyrosine occurs at positions 316 and 317.

As to quaternary structure, monomer. Interacts with integrins; the interaction promotes cell adhesion.

It is found in the secreted. Binds tightly to hydroxyapatite. Appears to form an integral part of the mineralized matrix. Probably important to cell-matrix interaction. Promotes adhesion and migration of various cells via the alpha-V/beta-3 integrin receptor (ITGAV:ITGB3). The polypeptide is Integrin-binding sialoprotein (Ibsp) (Rattus norvegicus (Rat)).